The following is a 379-amino-acid chain: Probable leucine aminopeptidase TRV_05286 (379 aa).

The first 18 residues, 1–18, serve as a signal peptide directing secretion; the sequence is MKIATLAVVSAFAATAIA. Zn(2+) is bound by residues H182 and D201. N-linked (GlcNAc...) asparagine glycosylation is found at N202 and N226. Zn(2+) contacts are provided by E240 and D267. An intrachain disulfide couples C312 to C316. A Zn(2+)-binding site is contributed by H345.

Belongs to the peptidase M28 family. M28E subfamily. As to quaternary structure, monomer. It depends on Zn(2+) as a cofactor.

Its subcellular location is the secreted. Probable extracellular aminopeptidase which contributes to pathogenicity. This chain is Probable leucine aminopeptidase TRV_05286, found in Trichophyton verrucosum (strain HKI 0517).